The primary structure comprises 205 residues: Colicin-E8 (205 aa).

2 disordered regions span residues 24–109 (AQTD…PDRI) and 136–187 (PELS…VYDM). Composition is skewed to basic and acidic residues over residues 53–76 (QERR…ESKR), 88–99 (PVGDKWLDDAGK), and 159–178 (RNKD…DKPI). Residues His-173, His-198, and His-202 each contribute to the Zn(2+) site.

Belongs to the colicin/pyosin nuclease family.

Its function is as follows. This plasmid-coded bactericidal protein is an endonuclease active on both single- and double-stranded DNA but with undefined specificity. In terms of biological role, colicins are polypeptide toxins produced by and active against E.coli and closely related bacteria. The chain is Colicin-E8 (col) from Escherichia coli.